Reading from the N-terminus, the 339-residue chain is Acyl-CoA dehydrogenase FadE28 (339 aa).

FAD contacts are provided by R227, Q238, H295, and G299.

This sequence belongs to the acyl-CoA dehydrogenase family. In terms of assembly, heterotetramer composed of FadE28 and FadE29. The cofactor is FAD.

It carries out the reaction 3-oxochol-4-en-22-oyl-CoA + A = 3-oxochola-4,17-dien-22-oyl-CoA + AH2. Its pathway is steroid metabolism; cholesterol degradation. In terms of biological role, involved in the third cycle of side chain dehydrogenation in the beta-oxidation of cholesterol catabolism. May play an important role for the initial macrophage invasion, possibly in response to the acidification of phagosome. It contributes partly to the virulence by increasing the efficiency of beta-oxidation. Catalyzes the dehydrogenation of 2'-propanoyl-CoA ester side chains of 3-oxo-4-pregnene-20-carboxyl-CoA (3-OPC-CoA) to yield 3-oxo-4,17-pregnadiene-20-carboxyl-CoA (3-OPDC-CoA). Also able to dehydrogenate steroyl-CoA such as 3-oxo-chol-4-en-24-oyl-CoA (3-OCO-CoA), 1beta-(2'-propanoyl-CoA)-3a-alpha-H-7a-beta-methylhexahydro-4-indanone (indanone-CoA ester), hexahydroindanone and pregenenone. The protein is Acyl-CoA dehydrogenase FadE28 (fadE28) of Mycobacterium tuberculosis (strain ATCC 25618 / H37Rv).